Consider the following 38-residue polypeptide: uncharacterized protein (38 aa).

This is an uncharacterized protein from Saccharomyces cerevisiae (strain ATCC 204508 / S288c) (Baker's yeast).